A 327-amino-acid chain; its full sequence is Interleukin-12 subunit beta (327 aa).

An N-terminal signal peptide occupies residues 1–22 (MCHQKLTISWFAVVLLASPLMA). Residues 23-106 (IWELEKDVYV…LSHSRLLLHK (84 aa)) enclose the Ig-like C2-type domain. Cysteines 50 and 90 form a disulfide. Residues Asn-125, Asn-135, Asn-223, and Asn-315 are each glycosylated (N-linked (GlcNAc...) asparagine). The Fibronectin type-III domain maps to 238–327 (PPKNLQLKPL…WSRWVSVPCS (90 aa)).

Belongs to the IL-12B family. In terms of assembly, heterodimer with IL12A; disulfide-linked. The heterodimer is known as interleukin IL-12. Heterodimer with IL23A; disulfide-linked. The heterodimer is known as interleukin IL-23. Also secreted as a monomer. Interacts with NBR1; this interaction promotes IL-12 secretion.

It is found in the secreted. Cytokine that can act as a growth factor for activated T and NK cells, enhance the lytic activity of NK/lymphokine-activated killer cells, and stimulate the production of IFN-gamma by resting PBMC. Functionally, associates with IL23A to form the IL-23 interleukin, a heterodimeric cytokine which functions in innate and adaptive immunity. IL-23 may constitute with IL-17 an acute response to infection in peripheral tissues. IL-23 binds to a heterodimeric receptor complex composed of IL12RB1 and IL23R, activates the Jak-Stat signaling cascade, stimulates memory rather than naive T-cells and promotes production of pro-inflammatory cytokines. IL-23 induces autoimmune inflammation and thus may be responsible for autoimmune inflammatory diseases and may be important for tumorigenesis. The polypeptide is Interleukin-12 subunit beta (IL12B) (Mesocricetus auratus (Golden hamster)).